We begin with the raw amino-acid sequence, 274 residues long: Probable starch degradation products transport system permease protein AmyC (274 aa).

The next 6 membrane-spanning stretches (helical) occupy residues 11-31 (LTFL…IILV), 73-93 (LIIT…TAYA), 103-123 (VIIY…VMIP), 139-159 (LVFM…YGAL), 184-204 (IILP…IMWI), and 238-258 (WNLG…FYFL). The 191-residue stretch at 69–259 (FSNTLIITVF…LPVVIFYFLA (191 aa)) folds into the ABC transmembrane type-1 domain.

Belongs to the binding-protein-dependent transport system permease family. MalFG subfamily.

The protein resides in the cell membrane. Probably part of a binding-protein-dependent transport system starch degradation products. Probably responsible for the translocation of the substrate across the membrane. The sequence is that of Probable starch degradation products transport system permease protein AmyC (amyC) from Thermoanaerobacterium thermosulfurigenes (Clostridium thermosulfurogenes).